A 225-amino-acid polypeptide reads, in one-letter code: Uracil-DNA glycosylase (225 aa).

Catalysis depends on D67, which acts as the Proton acceptor.

This sequence belongs to the uracil-DNA glycosylase (UDG) superfamily. UNG family.

It is found in the cytoplasm. It catalyses the reaction Hydrolyzes single-stranded DNA or mismatched double-stranded DNA and polynucleotides, releasing free uracil.. In terms of biological role, excises uracil residues from the DNA which can arise as a result of misincorporation of dUMP residues by DNA polymerase or due to deamination of cytosine. The polypeptide is Uracil-DNA glycosylase (Coxiella burnetii (strain Dugway 5J108-111)).